A 694-amino-acid chain; its full sequence is Methionine--tRNA ligase (694 aa).

The 'HIGH' region signature appears at 12–22 (PYANGPLHLGH). Zn(2+) is bound by residues C143, C146, C156, and C159. The 'KMSKS' region motif lies at 330–334 (KMSKS). K333 is an ATP binding site. The segment covering 550–575 (LAAPAAPATTSKAAPAKPDTKPAAAA) has biased composition (low complexity). Residues 550–580 (LAAPAAPATTSKAAPAKPDTKPAAAANPQSP) form a disordered region. A tRNA-binding domain is found at 591–694 (DFAKLDLRIG…SGAQPGMPVR (104 aa)).

This sequence belongs to the class-I aminoacyl-tRNA synthetase family. MetG type 1 subfamily. In terms of assembly, homodimer. Zn(2+) serves as cofactor.

It is found in the cytoplasm. The enzyme catalyses tRNA(Met) + L-methionine + ATP = L-methionyl-tRNA(Met) + AMP + diphosphate. In terms of biological role, is required not only for elongation of protein synthesis but also for the initiation of all mRNA translation through initiator tRNA(fMet) aminoacylation. This chain is Methionine--tRNA ligase, found in Xanthomonas oryzae pv. oryzae (strain MAFF 311018).